The following is a 798-amino-acid chain: Integrin beta-5 (798 aa).

The N-terminal stretch at 1-23 is a signal peptide; that stretch reads MPRVPATLYACLLGLCALVPRLA. Residues 24–719 lie on the Extracellular side of the membrane; the sequence is GLNICTSGSA…REPECGSAPN (696 aa). Residues 27-76 form the PSI domain; sequence ICTSGSATSCEECLLIHPKCAWCSKEYFGNPRSITSRCDLKANLIRNGCE. Disulfide bonds link Cys28-Cys46, Cys36-Cys463, Cys39-Cys64, Cys49-Cys75, Cys202-Cys211, Cys259-Cys300, Cys401-Cys413, Cys433-Cys461, Cys465-Cys484, Cys476-Cys487, Cys489-Cys498, Cys500-Cys530, Cys513-Cys528, Cys522-Cys533, Cys535-Cys548, Cys550-Cys571, Cys555-Cys569, Cys563-Cys574, and Cys576-Cys585. A VWFA domain is found at 136–378; that stretch reads YPVDLYYLMD…QLIINAYSSI (243 aa). 2 residues coordinate Mg(2+): Ser147 and Ser149. Positions 149, 152, 153, and 184 each coordinate Ca(2+). Residues Asn242, Asp244, Pro246, and Glu247 each coordinate Ca(2+). Glu247 lines the Mg(2+) pocket. N-linked (GlcNAc...) asparagine glycosylation is present at Asn347. Gly362 serves as a coordination point for Ca(2+). Asn460 and Asn479 each carry an N-linked (GlcNAc...) asparagine glycan. 4 I-EGF domains span residues 465 to 499, 500 to 549, 550 to 586, and 587 to 626; these read CSTG…TRCE, CQEG…PFCE, CDSF…DNCN, and CSTD…ETCE. A glycan (N-linked (GlcNAc...) asparagine) is linked at Asn505. Residue Asn586 is glycosylated (N-linked (GlcNAc...) asparagine). 9 disulfide bridges follow: Cys587/Cys610, Cys594/Cys608, Cys602/Cys613, Cys615/Cys625, Cys628/Cys631, Cys635/Cys682, Cys641/Cys661, Cys644/Cys657, and Cys690/Cys714. Asn654 and Asn705 each carry an N-linked (GlcNAc...) asparagine glycan. The chain crosses the membrane as a helical span at residues 720 to 742; that stretch reads AMTILLAVVGSILLIGMALLAIW. Residues 743–798 lie on the Cytoplasmic side of the membrane; sequence KLLVTIHDRREFAKFQSERSRARYEMASNPLYRKPISTHTVDFAFNKFNKSYNGSV. At Ser770 the chain carries Phosphoserine.

The protein belongs to the integrin beta chain family. As to quaternary structure, heterodimer of an alpha and a beta subunit. Beta-5 (ITGB5) associates with alpha-V (ITGAV). Interacts with MYO10. Interacts with DAB2. Integrin ITGAV:ITGB5 interacts with FBLN5 (via N-terminus). ITGAV:ITGB5 interacts with CCN3. Interacts with tensin TNS3; TNS3 also interacts with PEAK1, thus acting as an adapter molecule to bridge the association of PEAK1 with ITGB5.

The protein localises to the cell membrane. Integrin alpha-V/beta-5 (ITGAV:ITGB5) is a receptor for fibronectin. It recognizes the sequence R-G-D in its ligand. This chain is Integrin beta-5 (Itgb5), found in Mus musculus (Mouse).